The chain runs to 494 residues: MTLRRASGCRQLTLTIGLALTLGLLQWPIGDVRGQDGASPAQVLQELLTRYGDNASISVPQLRSLLVRLNGGQSEDHDSKTQPTRTNASKCLAADTLAVYGMSEQSRIDERGLQQICPTMIQQLDSQACKTQPNQESESSPRPTEAEVWGYGLLCVTVISLCSLVGASVVPFMRKTFYKRLLLYFIALAIGTLYSNALFQLIPEAFGFDPMEDYYVPKSAVVFGGFYLFFFTEKILKMILKPKDTGGHGHGHSHFPAERYANSNGDLEDGVMEKLQNGEAGGAALPRAEADGRGVGEDDKMLSTGQTVQDTQSSGGGGTGGCYWLKGRAYSDIGTLAWMITLSDGLHNFIDGLAIGASFTASVFQGISTSVAILCEEFPHELGDFVILLNAGMSIQQALFFNFLSACCCYLGMGFGILAGNNFSPNWIFALAGGMFLYIALADMFPEMNEVSREEEEAGGSGFLLTFALQNAGLLTGFAIMLVLTIYSGQIQLG.

An N-terminal signal peptide occupies residues 1–34 (MTLRRASGCRQLTLTIGLALTLGLLQWPIGDVRG). Over 35–152 (QDGASPAQVL…PTEAEVWGYG (118 aa)) the chain is Extracellular. The chain crosses the membrane as a helical span at residues 153 to 173 (LLCVTVISLCSLVGASVVPFM). Residues 174–181 (RKTFYKRL) lie on the Cytoplasmic side of the membrane. Residues 182–202 (LLYFIALAIGTLYSNALFQLI) traverse the membrane as a helical segment. Over 203–219 (PEAFGFDPMEDYYVPKS) the chain is Extracellular. A helical transmembrane segment spans residues 220–240 (AVVFGGFYLFFFTEKILKMIL). At 241-397 (KPKDTGGHGH…LLNAGMSIQQ (157 aa)) the chain is on the cytoplasmic side. An HHHGHXHX-motif motif is present at residues 248-255 (HGHGHSHF). Positions 376–381 (EEFPHE) match the XEXPHE-motif motif. A helical membrane pass occupies residues 398–418 (ALFFNFLSACCCYLGMGFGIL). The Extracellular portion of the chain corresponds to 419–426 (AGNNFSPN). Residues 427–447 (WIFALAGGMFLYIALADMFPE) traverse the membrane as a helical segment. The Cytoplasmic segment spans residues 448 to 462 (MNEVSREEEEAGGSG). The chain crosses the membrane as a helical span at residues 463–483 (FLLTFALQNAGLLTGFAIMLV). Residues 484–494 (LTIYSGQIQLG) are Extracellular-facing.

Belongs to the ZIP transporter (TC 2.A.5) family. As to quaternary structure, homotrimer.

The protein localises to the cell membrane. It is found in the apical cell membrane. It localises to the basolateral cell membrane. Its subcellular location is the early endosome membrane. The protein resides in the late endosome membrane. The protein localises to the lysosome membrane. It carries out the reaction Zn(2+)(out) + 2 hydrogencarbonate(out) = Zn(2+)(in) + 2 hydrogencarbonate(in). It catalyses the reaction Mn(2+)(out) + 2 hydrogencarbonate(out) = Mn(2+)(in) + 2 hydrogencarbonate(in). The enzyme catalyses Fe(2+)(out) + 2 hydrogencarbonate(out) = Fe(2+)(in) + 2 hydrogencarbonate(in). The catalysed reaction is Cd(2+)(out) + 2 hydrogencarbonate(out) = Cd(2+)(in) + 2 hydrogencarbonate(in). Functionally, broad-scope metal ion transporter with a preference for zinc uptake. Also mediates cellular uptake of nontransferrin-bound iron. Electroneutral transporter of the plasma membrane mediating the cellular uptake of the divalent metal cations zinc, manganese and iron that are important for tissue homeostasis, metabolism, development and immunity. Functions as an energy-dependent symporter, transporting through the membranes an electroneutral complex composed of a divalent metal cation and two bicarbonate anions. Beside these endogenous cellular substrates, can also import cadmium a non-essential metal which is cytotoxic and carcinogenic. In Danio rerio (Zebrafish), this protein is Metal cation symporter ZIP14.